Reading from the N-terminus, the 146-residue chain is MVMGLGLFLLVFMLGLGLTPPTLAQDNSRYRDFLAKHYDATPQGRNDRYCESTMRRRHLTSPCKDINTFIHGNRHHIKAICGDENGNPYGENLRISKSPFQVTTCNLRGGSPRPPCQYRATRGSRNIVVGCENGLPVHLDESIFRP.

The signal sequence occupies residues 1-24; it reads MVMGLGLFLLVFMLGLGLTPPTLA. Q25 is modified (pyrrolidone carboxylic acid). H37 (proton acceptor) is an active-site residue. Residue R45 coordinates tRNA. 3 cysteine pairs are disulfide-bonded: C50-C105, C63-C116, and C81-C131. The Nucleolar localization signal motif lies at 55-59; the sequence is RRRHL. TRNA-binding residues include C105 and I127. Residue H138 is the Proton donor of the active site.

It belongs to the pancreatic ribonuclease family. Homodimer. Interacts with RNH1; inhibiting ANG ribonuclease activity. Interacts with PCNA.

The protein resides in the secreted. It is found in the nucleus. The protein localises to the nucleolus. Its subcellular location is the cytoplasm. It localises to the stress granule. With respect to regulation, has weak tRNA ribonuclease activity by itself due to partial autoinhibition by its C-terminus, which folds into a short alpha-helix that partially occludes the substrate-binding site. In absence of stress, the ribonuclease activity is inhibited by RNH1 in the cytoplasm. In response to stress, dissociates from RNH1 in the cytoplasm and associates with cytoplasmic ribosomes with vacant A-sites: ribosomes directly activate the tRNA ribonuclease activity of ANG by refolding the C-terminal alpha-helix. In response to stress, the angiogenic activity of ANG is inhibited by RNH1 in the nucleus. Secreted ribonuclease that can either promote or restrict cell proliferation of target cells, depending on the context. Endocytosed in target cells via its receptor PLXNB2 and translocates to the cytoplasm or nucleus. Under stress conditions, localizes to the cytoplasm and promotes the assembly of stress granules (SGs): specifically cleaves a subset of tRNAs within anticodon loops to produce tRNA-derived stress-induced fragments (tiRNAs), resulting in translation repression and inhibition of cell proliferation. tiRNas also prevent formation of apoptosome, thereby promoting cell survival. Preferentially cleaves RNAs between a pyrimidine and an adenosine residue, suggesting that it cleaves the anticodon loop of tRNA(Ala) (32-UUAGCAU-38) after positions 33 and 36. Cleaves a subset of tRNAs, including tRNA(Ala), tRNA(Glu), tRNA(Gly), tRNA(Lys), tRNA(Val), tRNA(His), tRNA(Asp) and tRNA(Sec). Under growth conditions and in differentiated cells, translocates to the nucleus and stimulates ribosomal RNA (rRNA) transcription, including that containing the initiation site sequences of 45S rRNA, thereby promoting cell growth and proliferation. Angiogenin induces vascularization of normal and malignant tissues via its ability to promote rRNA transcription. Involved in hematopoietic stem and progenitor cell (HSPC) growth and survival by promoting rRNA transcription in growth conditions and inhibiting translation in response to stress, respectively. Mediates the crosstalk between myeloid and intestinal epithelial cells to protect the intestinal epithelial barrier integrity: secreted by myeloid cells and promotes intestinal epithelial cells proliferation and survival. Also mediates osteoclast-endothelial cell crosstalk in growing bone: produced by osteoclasts and protects the neighboring vascular cells against senescence by promoting rRNA transcription. The protein is Angiogenin (ANG) of Chlorocebus aethiops (Green monkey).